The primary structure comprises 763 residues: Thyrotropin receptor (763 aa).

Residues 1–21 form the signal peptide; that stretch reads MRQTPLLQLALLLSLPRSLGG. Residues 22–412 lie on the Extracellular side of the membrane; the sequence is KGCPSPPCEC…EFNPCEDIMG (391 aa). Cys31 and Cys41 are oxidised to a cystine. N-linked (GlcNAc...) asparagine glycans are attached at residues Asn77 and Asn99. 7 LRR repeats span residues 100-124, 125-150, 151-174, 176-199, 201-223, 225-248, and 264-288; these read LSKM…ALKE, LPLL…VYST, DVFF…AFQG, CNET…AFNG, KLDA…AFGG, YSGP…GLEH, and PLTL…AFKN. Asn177 and Asn198 each carry an N-linked (GlcNAc...) asparagine glycan. Asn302 carries an N-linked (GlcNAc...) asparagine glycan. Tyr384 is subject to Sulfotyrosine. A helical transmembrane segment spans residues 413–440; the sequence is YKFLRIVVWFVSLLALLGNVFVLIILLT. The Cytoplasmic portion of the chain corresponds to 441–449; that stretch reads SHYKLTVPR. The chain crosses the membrane as a helical span at residues 450-472; that stretch reads FLMCNLAFADFCMGMYLLLIASV. Residues 473 to 493 are Extracellular-facing; the sequence is DLYTHSEYYNHAIDWQTGPGC. Cys493 and Cys568 form a disulfide bridge. Residues 494–516 form a helical membrane-spanning segment; the sequence is NAAGFFTVFASELSVYTLTVITL. Over 517-536 the chain is Cytoplasmic; that stretch reads ERWYAITFAMRLDRKMRLRH. Residues 537–559 form a helical membrane-spanning segment; the sequence is AYAIMVGGWVCCFLLALLPLVGI. The Extracellular segment spans residues 560–579; the sequence is SSYAKVSICLPMDTETPLAL. The chain crosses the membrane as a helical span at residues 580 to 601; that stretch reads AYIILVLLLNIVAFIIVCSCYV. The Cytoplasmic segment spans residues 602 to 624; sequence KIYITVRNPQYNTGDKDTKIAKR. Residues 625–648 traverse the membrane as a helical segment; that stretch reads MAVLIFTDFMCMAPISFYALSALM. At 649–659 the chain is on the extracellular side; sequence NKPLITVTNSK. A helical transmembrane segment spans residues 660 to 681; that stretch reads ILLVLFYPLNSCANPFLYAIFT. The Cytoplasmic segment spans residues 682–763; the sequence is KTFQRDVFIL…ISKEYNQTVL (82 aa). Residues 761–763 carry the PDZ-binding motif; the sequence is TVL.

This sequence belongs to the G-protein coupled receptor 1 family. FSH/LSH/TSH subfamily. As to quaternary structure, interacts with heterodimer GPHA2:GPHB5; this interaction stimulates cAMP production. Interacts (via the PDZ-binding motif) with SCRIB; regulates TSHR trafficking and function. Post-translationally, glycosylated. In terms of processing, sulfated. Sulfation on Tyr-384 plays a role in thyrotropin receptor binding and activation.

It localises to the cell membrane. Its subcellular location is the basolateral cell membrane. Its function is as follows. Receptor for the thyroid-stimulating hormone (TSH) or thyrotropin. Also acts as a receptor for the heterodimeric glycoprotein hormone (GPHA2:GPHB5) or thyrostimulin. The activity of this receptor is mediated by G proteins which activate adenylate cyclase. Plays a central role in controlling thyroid cell metabolism. The protein is Thyrotropin receptor (TSHR) of Felis catus (Cat).